The following is a 346-amino-acid chain: Phosphate acyltransferase (346 aa).

The protein belongs to the PlsX family. In terms of assembly, homodimer. Probably interacts with PlsY.

It localises to the cytoplasm. The enzyme catalyses a fatty acyl-[ACP] + phosphate = an acyl phosphate + holo-[ACP]. The protein operates within lipid metabolism; phospholipid metabolism. Catalyzes the reversible formation of acyl-phosphate (acyl-PO(4)) from acyl-[acyl-carrier-protein] (acyl-ACP). This enzyme utilizes acyl-ACP as fatty acyl donor, but not acyl-CoA. The protein is Phosphate acyltransferase of Geotalea daltonii (strain DSM 22248 / JCM 15807 / FRC-32) (Geobacter daltonii).